Consider the following 475-residue polypeptide: Bifunctional protein HldE (475 aa).

The tract at residues 1-318 (MKITLPEFGK…ANALYTEQET (318 aa)) is ribokinase. 195-198 (NMSE) serves as a coordination point for ATP. Residue Asp264 is part of the active site. The tract at residues 344-475 (MTNGCFDILH…DIIKTIRERG (132 aa)) is cytidylyltransferase.

It in the N-terminal section; belongs to the carbohydrate kinase PfkB family. In the C-terminal section; belongs to the cytidylyltransferase family. Homodimer.

The enzyme catalyses D-glycero-beta-D-manno-heptose 7-phosphate + ATP = D-glycero-beta-D-manno-heptose 1,7-bisphosphate + ADP + H(+). It catalyses the reaction D-glycero-beta-D-manno-heptose 1-phosphate + ATP + H(+) = ADP-D-glycero-beta-D-manno-heptose + diphosphate. Its pathway is nucleotide-sugar biosynthesis; ADP-L-glycero-beta-D-manno-heptose biosynthesis; ADP-L-glycero-beta-D-manno-heptose from D-glycero-beta-D-manno-heptose 7-phosphate: step 1/4. It functions in the pathway nucleotide-sugar biosynthesis; ADP-L-glycero-beta-D-manno-heptose biosynthesis; ADP-L-glycero-beta-D-manno-heptose from D-glycero-beta-D-manno-heptose 7-phosphate: step 3/4. Functionally, catalyzes the phosphorylation of D-glycero-D-manno-heptose 7-phosphate at the C-1 position to selectively form D-glycero-beta-D-manno-heptose-1,7-bisphosphate. Catalyzes the ADP transfer from ATP to D-glycero-beta-D-manno-heptose 1-phosphate, yielding ADP-D-glycero-beta-D-manno-heptose. The polypeptide is Bifunctional protein HldE (Aeromonas salmonicida (strain A449)).